The following is a 574-amino-acid chain: 2-succinyl-5-enolpyruvyl-6-hydroxy-3-cyclohexene-1-carboxylate synthase (574 aa).

The protein belongs to the TPP enzyme family. MenD subfamily. In terms of assembly, homodimer. Mg(2+) is required as a cofactor. Mn(2+) serves as cofactor. It depends on thiamine diphosphate as a cofactor.

The enzyme catalyses isochorismate + 2-oxoglutarate + H(+) = 5-enolpyruvoyl-6-hydroxy-2-succinyl-cyclohex-3-ene-1-carboxylate + CO2. The protein operates within quinol/quinone metabolism; 1,4-dihydroxy-2-naphthoate biosynthesis; 1,4-dihydroxy-2-naphthoate from chorismate: step 2/7. Its pathway is quinol/quinone metabolism; menaquinone biosynthesis. In terms of biological role, catalyzes the thiamine diphosphate-dependent decarboxylation of 2-oxoglutarate and the subsequent addition of the resulting succinic semialdehyde-thiamine pyrophosphate anion to isochorismate to yield 2-succinyl-5-enolpyruvyl-6-hydroxy-3-cyclohexene-1-carboxylate (SEPHCHC). This is 2-succinyl-5-enolpyruvyl-6-hydroxy-3-cyclohexene-1-carboxylate synthase from Vibrio atlanticus (strain LGP32) (Vibrio splendidus (strain Mel32)).